Reading from the N-terminus, the 259-residue chain is Ribonuclease PH (259 aa).

Residues arginine 88 and 126–128 (GTR) contribute to the phosphate site.

It belongs to the RNase PH family. Homohexameric ring arranged as a trimer of dimers.

It carries out the reaction tRNA(n+1) + phosphate = tRNA(n) + a ribonucleoside 5'-diphosphate. Phosphorolytic 3'-5' exoribonuclease that plays an important role in tRNA 3'-end maturation. Removes nucleotide residues following the 3'-CCA terminus of tRNAs; can also add nucleotides to the ends of RNA molecules by using nucleoside diphosphates as substrates, but this may not be physiologically important. Probably plays a role in initiation of 16S rRNA degradation (leading to ribosome degradation) during starvation. The chain is Ribonuclease PH from Mycolicibacterium smegmatis (strain ATCC 700084 / mc(2)155) (Mycobacterium smegmatis).